The primary structure comprises 219 residues: Ras-related protein Rab-3B (219 aa).

A2 is subject to N-acetylalanine. Residues S31, S32, V33, G34, K35, T36, S37, P49, and S53 each contribute to the GTP site. T36 contributes to the Mg(2+) binding site. Positions D45 to D58 match the Switch 1 motif. Residues T54 and D77 each contribute to the Mg(2+) site. The Switch 2 signature appears at T78–M96. Residue G80 participates in GTP binding. T86 bears the Phosphothreonine mark. GTP-binding residues include N135, K136, D138, A166, and K167. S188 is modified (phosphoserine). Residues C217 and C219 are each lipidated (S-geranylgeranyl cysteine). A Cysteine methyl ester modification is found at C219.

Belongs to the small GTPase superfamily. Rab family. As to quaternary structure, interacts with RIMS1, RIMS2, RPH3A and RPH3AL. The GTP-bound form interacts with GAS8/DRC4 (via coiled-coil domains). Interacts with GDI2, CHM and CHML; phosphorylation at Thr-86 disrupts these interactions. Interacts with MADD (via uDENN domain); the GTP-bound form is preferred for interaction. Mg(2+) serves as cofactor. In terms of processing, phosphorylation of Thr-86 in the switch II region by LRRK2 prevents the association of RAB regulatory proteins, including CHM, CHML and RAB GDP dissociation inhibitor GDI2.

Its subcellular location is the cell membrane. The protein resides in the golgi apparatus. It carries out the reaction GTP + H2O = GDP + phosphate + H(+). Its activity is regulated as follows. Regulated by guanine nucleotide exchange factors (GEFs) which promote the exchange of bound GDP for free GTP. Regulated by GTPase activating proteins (GAPs) which increase the GTP hydrolysis activity. Inhibited by GDP dissociation inhibitors (GDIs) which prevent Rab-GDP dissociation. Functionally, the small GTPases Rab are key regulators of intracellular membrane trafficking, from the formation of transport vesicles to their fusion with membranes. Rabs cycle between an inactive GDP-bound form and an active GTP-bound form that is able to recruit to membranes different sets of downstream effectors directly responsible for vesicle formation, movement, tethering and fusion. The protein is Ras-related protein Rab-3B (RAB3B) of Bos taurus (Bovine).